A 330-amino-acid polypeptide reads, in one-letter code: Aspartate--ammonia ligase (330 aa).

Belongs to the class-II aminoacyl-tRNA synthetase family. AsnA subfamily.

The protein resides in the cytoplasm. The enzyme catalyses L-aspartate + NH4(+) + ATP = L-asparagine + AMP + diphosphate + H(+). It participates in amino-acid biosynthesis; L-asparagine biosynthesis; L-asparagine from L-aspartate (ammonia route): step 1/1. This is Aspartate--ammonia ligase from Streptococcus pneumoniae serotype 2 (strain D39 / NCTC 7466).